The primary structure comprises 353 residues: Probable arabinan endo-1,5-alpha-L-arabinosidase B (353 aa).

An N-terminal signal peptide occupies residues 1 to 16; it reads MVLVATLFSLFTVSLC. The Proton acceptor role is filled by Asp-39. Asn-194 is a glycosylation site (N-linked (GlcNAc...) asparagine). A disordered region spans residues 202-227; sequence HLAKHPKTERVNSQDQNPDPLCRDSS. The Proton donor role is filled by Glu-233.

This sequence belongs to the glycosyl hydrolase 43 family.

It is found in the secreted. The catalysed reaction is Endohydrolysis of (1-&gt;5)-alpha-arabinofuranosidic linkages in (1-&gt;5)-arabinans.. The protein operates within glycan metabolism; L-arabinan degradation. Its function is as follows. Endo-1,5-alpha-L-arabinanase involved in degradation of pectin. Its preferred substrate is linear 1,5-alpha-L-arabinan. This chain is Probable arabinan endo-1,5-alpha-L-arabinosidase B (abnB), found in Aspergillus oryzae (strain ATCC 42149 / RIB 40) (Yellow koji mold).